A 396-amino-acid polypeptide reads, in one-letter code: Tetracycline resistance protein, class C (396 aa).

The Cytoplasmic segment spans residues 1–6 (MKSNNA). Residues 7–27 (LIVILGTVTLDAVGIGLVMPV) traverse the membrane as a helical segment. Residues 28–45 (LPGLLRDIVHSDSIASHY) are Periplasmic-facing. The helical transmembrane segment at 46-66 (GVLLALYALMQFLCAPVLGAL) threads the bilayer. Topologically, residues 67-79 (SDRFGRRPVLLAS) are cytoplasmic. The helical transmembrane segment at 80 to 100 (LLGATIDYAIMATTPVLWILY) threads the bilayer. The Periplasmic segment spans residues 101–103 (AGR). The chain crosses the membrane as a helical span at residues 104 to 124 (IVAGITGATGAVAGAYIADIT). Over 125–138 (DGEDRARHFGLMSA) the chain is Cytoplasmic. A helical transmembrane segment spans residues 139-159 (CFGVGMVAGPVAGGLLGAISL). Position 160 (His160) is a topological domain, periplasmic. Residues 161 to 181 (APFLAAAVLNGLNLLLGCFLM) form a helical membrane-spanning segment. Residues 182–210 (QESHKGERRPMPLRAFNPVSSFRWARGMT) lie on the Cytoplasmic side of the membrane. Residues 211 to 231 (IVAALMTVFFIMQLVGQVPAA) traverse the membrane as a helical segment. At 232-246 (LWVIFGEDRFRWSAT) the chain is on the periplasmic side. Residues 247–267 (MIGLSLAVFGILHALAQAFVT) form a helical membrane-spanning segment. Residues 268-277 (GPATKRFGEK) lie on the Cytoplasmic side of the membrane. Residues 278–298 (QAIIAGMAADALGYVLLAFAT) form a helical membrane-spanning segment. Arg299 is a topological domain (periplasmic). Residues 300–320 (GWMAFPIMILLASGGIGMPAL) form a helical membrane-spanning segment. Over 321 to 339 (QAMLSRQVDDDHQGQLQGS) the chain is Cytoplasmic. Residues 340–360 (LAALTSLTSITGPLIVTAIYA) traverse the membrane as a helical segment. Residues 361-364 (ASAS) lie on the Periplasmic side of the membrane. Residues 365–385 (TWNGLAWIVGAALYLVCLPAL) traverse the membrane as a helical segment. Over 386–396 (RRGAWSRATST) the chain is Cytoplasmic.

Belongs to the major facilitator superfamily. TCR/Tet family.

It localises to the cell inner membrane. In terms of biological role, resistance to tetracycline by an active tetracycline efflux. This is an energy-dependent process that decreases the accumulation of the antibiotic in whole cells. This protein functions as a metal-tetracycline/H(+) antiporter. In Escherichia coli, this protein is Tetracycline resistance protein, class C (tetA).